A 116-amino-acid polypeptide reads, in one-letter code: Phosphoribosyl-ATP pyrophosphatase (116 aa).

This sequence belongs to the PRA-PH family.

It is found in the cytoplasm. The catalysed reaction is 1-(5-phospho-beta-D-ribosyl)-ATP + H2O = 1-(5-phospho-beta-D-ribosyl)-5'-AMP + diphosphate + H(+). The protein operates within amino-acid biosynthesis; L-histidine biosynthesis; L-histidine from 5-phospho-alpha-D-ribose 1-diphosphate: step 2/9. The protein is Phosphoribosyl-ATP pyrophosphatase of Bordetella avium (strain 197N).